The sequence spans 287 residues: Ribosomal RNA small subunit methyltransferase A (287 aa).

Positions 28, 30, 55, 77, 103, and 123 each coordinate S-adenosyl-L-methionine.

Belongs to the class I-like SAM-binding methyltransferase superfamily. rRNA adenine N(6)-methyltransferase family. RsmA subfamily.

It is found in the cytoplasm. It catalyses the reaction adenosine(1518)/adenosine(1519) in 16S rRNA + 4 S-adenosyl-L-methionine = N(6)-dimethyladenosine(1518)/N(6)-dimethyladenosine(1519) in 16S rRNA + 4 S-adenosyl-L-homocysteine + 4 H(+). Functionally, specifically dimethylates two adjacent adenosines (A1518 and A1519) in the loop of a conserved hairpin near the 3'-end of 16S rRNA in the 30S particle. May play a critical role in biogenesis of 30S subunits. The polypeptide is Ribosomal RNA small subunit methyltransferase A (Rhodopseudomonas palustris (strain BisA53)).